We begin with the raw amino-acid sequence, 154 residues long: 6,7-dimethyl-8-ribityllumazine synthase (154 aa).

5-amino-6-(D-ribitylamino)uracil contacts are provided by residues Phe21, Ala55 to Glu57, and Cys79 to Ile81. Ala84–Thr85 contacts (2S)-2-hydroxy-3-oxobutyl phosphate. His87 acts as the Proton donor in catalysis. Phe111 serves as a coordination point for 5-amino-6-(D-ribitylamino)uracil. Arg125 contributes to the (2S)-2-hydroxy-3-oxobutyl phosphate binding site.

Belongs to the DMRL synthase family. In terms of assembly, forms an icosahedral capsid composed of 60 subunits, arranged as a dodecamer of pentamers.

The catalysed reaction is (2S)-2-hydroxy-3-oxobutyl phosphate + 5-amino-6-(D-ribitylamino)uracil = 6,7-dimethyl-8-(1-D-ribityl)lumazine + phosphate + 2 H2O + H(+). The protein operates within cofactor biosynthesis; riboflavin biosynthesis; riboflavin from 2-hydroxy-3-oxobutyl phosphate and 5-amino-6-(D-ribitylamino)uracil: step 1/2. Catalyzes the formation of 6,7-dimethyl-8-ribityllumazine by condensation of 5-amino-6-(D-ribitylamino)uracil with 3,4-dihydroxy-2-butanone 4-phosphate. This is the penultimate step in the biosynthesis of riboflavin. This chain is 6,7-dimethyl-8-ribityllumazine synthase, found in Macrococcus caseolyticus (strain JCSC5402) (Macrococcoides caseolyticum).